A 278-amino-acid polypeptide reads, in one-letter code: Indole-3-glycerol phosphate synthase (278 aa).

This sequence belongs to the TrpC family.

The enzyme catalyses 1-(2-carboxyphenylamino)-1-deoxy-D-ribulose 5-phosphate + H(+) = (1S,2R)-1-C-(indol-3-yl)glycerol 3-phosphate + CO2 + H2O. The protein operates within amino-acid biosynthesis; L-tryptophan biosynthesis; L-tryptophan from chorismate: step 4/5. This Pseudomonas aeruginosa (strain LESB58) protein is Indole-3-glycerol phosphate synthase.